The sequence spans 312 residues: Putative S-adenosyl-L-methionine-dependent methyltransferase Mkms_0097 (312 aa).

S-adenosyl-L-methionine is bound by residues Asp-134 and 163 to 164 (DL).

The protein belongs to the UPF0677 family.

In terms of biological role, exhibits S-adenosyl-L-methionine-dependent methyltransferase activity. The chain is Putative S-adenosyl-L-methionine-dependent methyltransferase Mkms_0097 from Mycobacterium sp. (strain KMS).